A 317-amino-acid chain; its full sequence is Ribosomal RNA small subunit methyltransferase H (317 aa).

Residues 30–32 (GGH), aspartate 50, tyrosine 74, aspartate 95, and glutamine 102 each bind S-adenosyl-L-methionine.

It belongs to the methyltransferase superfamily. RsmH family.

Its subcellular location is the cytoplasm. The catalysed reaction is cytidine(1402) in 16S rRNA + S-adenosyl-L-methionine = N(4)-methylcytidine(1402) in 16S rRNA + S-adenosyl-L-homocysteine + H(+). Its function is as follows. Specifically methylates the N4 position of cytidine in position 1402 (C1402) of 16S rRNA. This is Ribosomal RNA small subunit methyltransferase H from Nitrosomonas europaea (strain ATCC 19718 / CIP 103999 / KCTC 2705 / NBRC 14298).